An 860-amino-acid chain; its full sequence is Gag-Pro polyprotein (860 aa).

Gly2 carries N-myristoyl glycine; by host lipidation. Basic and acidic residues-rich tracts occupy residues 154-169 (PYEE…EKDH) and 178-193 (QRKE…KDQK). The interval 154–193 (PYEEKEKADKNEEKDHVRKVKKIVQRKENSEHKRKEKDQK) is disordered. Positions 305–308 (PSAP) match the PTAP/PSAP motif motif. CCHC-type zinc fingers lie at residues 525–542 (PVCF…DCKE) and 552–569 (GLCP…ECKS). Residues 572-631 (DKDGNPLPPLETNAENSKNLVKGQSPSPTQKGDKGKDSGLNPEAPPFTIHDLPRGTPGSA) are disordered. Positions 584-601 (NAENSKNLVKGQSPSPTQ) are enriched in polar residues. Residues 766 to 841 (FLGLLDTGAD…LPFTLWGRDI (76 aa)) enclose the Peptidase A2 domain. The active-site Protease; shared with dimeric partner is Asp771.

In terms of assembly, homodimer; when myristoylated. As to quaternary structure, homodimer. NC-dUTPase is a homotrimer. It depends on Mg(2+) as a cofactor. Released by autocatalytic processing. In terms of processing, myristoylated. Myristoylation of the matrix (MA) domain mediates the transport and binding of Gag polyproteins to the host plasma membrane and is required for the assembly of viral particles. Post-translationally, specific enzymatic cleavages in vivo yield mature proteins.

It localises to the virion. It carries out the reaction dUTP + H2O = dUMP + diphosphate + H(+). With respect to regulation, inhibited by pepstatin A. Matrix protein. In terms of biological role, nucleocapsid protein p14: Binds strongly to viral nucleic acids and promote their aggregation. Also destabilizes the nucleic acids duplexes via highly structured zinc-binding motifs. Functionally, capsid protein. Its function is as follows. NC-dUTPase has dUTPase activity, thereby preventing incorporation of uracil into DNA. The aspartyl protease mediates proteolytic cleavages of Gag and Gag-Pol polyproteins during or shortly after the release of the virion from the plasma membrane. Cleavages take place as an ordered, step-wise cascade to yield mature proteins. This process is called maturation. Displays maximal activity during the budding process just prior to particle release from the cell. The protein is Gag-Pro polyprotein (gag-pro) of Mus musculus (Mouse).